The primary structure comprises 471 residues: Ribulose bisphosphate carboxylase large chain (471 aa).

Substrate contacts are provided by N119 and T169. K171 acts as the Proton acceptor in catalysis. Residue K173 coordinates substrate. Residues K197, D199, and E200 each contribute to the Mg(2+) site. K197 carries the post-translational modification N6-carboxylysine. Residue H290 is the Proton acceptor of the active site. Residues R291, H323, and S375 each contribute to the substrate site.

The protein belongs to the RuBisCO large chain family. Type I subfamily. In terms of assembly, heterohexadecamer of 8 large chains and 8 small chains; disulfide-linked. The disulfide link is formed within the large subunit homodimers. Requires Mg(2+) as cofactor. The disulfide bond which can form in the large chain dimeric partners within the hexadecamer appears to be associated with oxidative stress and protein turnover.

The protein localises to the carboxysome. The enzyme catalyses 2 (2R)-3-phosphoglycerate + 2 H(+) = D-ribulose 1,5-bisphosphate + CO2 + H2O. The catalysed reaction is D-ribulose 1,5-bisphosphate + O2 = 2-phosphoglycolate + (2R)-3-phosphoglycerate + 2 H(+). Its function is as follows. RuBisCO catalyzes two reactions: the carboxylation of D-ribulose 1,5-bisphosphate, the primary event in carbon dioxide fixation, as well as the oxidative fragmentation of the pentose substrate in the photorespiration process. Both reactions occur simultaneously and in competition at the same active site. The protein is Ribulose bisphosphate carboxylase large chain of Crocosphaera subtropica (strain ATCC 51142 / BH68) (Cyanothece sp. (strain ATCC 51142)).